The sequence spans 169 residues: MEEWDLLNENRELTGKTHIRGEKLAPGELHLVIHVCIFNEKGQLLIQKRQKDKEGWPNYWDLSAAGSALKGETSQQAAEREVQEELGIMIDLSGTRAKFSYHFEEGFDDYWFITKDVQLSDLTLQKEEVADARFVTKEELEALRSSGEFIPYFFLNQLFNLKNATTIHF.

In terms of domain architecture, Nudix hydrolase spans 28 to 157 (ELHLVIHVCI…EFIPYFFLNQ (130 aa)). The Nudix box motif lies at 65–87 (AGSALKGETSQQAAEREVQEELG). Mg(2+)-binding residues include Glu81 and Glu85.

Belongs to the Nudix hydrolase family. Requires Mg(2+) as cofactor.

This is an uncharacterized protein from Listeria monocytogenes serovar 1/2a (strain ATCC BAA-679 / EGD-e).